Reading from the N-terminus, the 387-residue chain is 8-amino-7-oxononanoate synthase (387 aa).

Arg19 is a substrate binding site. 106 to 107 lines the pyridoxal 5'-phosphate pocket; that stretch reads GY. His131 provides a ligand contact to substrate. Residues Ser177, His205, and Thr236 each contribute to the pyridoxal 5'-phosphate site. Residue Lys239 is modified to N6-(pyridoxal phosphate)lysine. Thr353 serves as a coordination point for substrate.

Belongs to the class-II pyridoxal-phosphate-dependent aminotransferase family. BioF subfamily. In terms of assembly, homodimer. Pyridoxal 5'-phosphate is required as a cofactor.

The catalysed reaction is 6-carboxyhexanoyl-[ACP] + L-alanine + H(+) = (8S)-8-amino-7-oxononanoate + holo-[ACP] + CO2. The protein operates within cofactor biosynthesis; biotin biosynthesis. Its function is as follows. Catalyzes the decarboxylative condensation of pimeloyl-[acyl-carrier protein] and L-alanine to produce 8-amino-7-oxononanoate (AON), [acyl-carrier protein], and carbon dioxide. This is 8-amino-7-oxononanoate synthase from Nitrosomonas eutropha (strain DSM 101675 / C91 / Nm57).